The primary structure comprises 632 residues: Nucleoside triphosphatase I (632 aa).

Positions 42–204 constitute a Helicase ATP-binding domain; sequence FLGLDKMHSL…IMLVNLLRPK (163 aa). 55–62 is an ATP binding site; that stretch reads HETGVGKT. The DEXH box motif lies at 141–144; that stretch reads DECH. One can recognise a Helicase C-terminal domain in the interval 367 to 532; it reads KFTDVCLRIL…EFTQLFKVFK (166 aa). The interval 457–524 is binding to the cap-specific mRNA (nucleoside-2'-O-)-methyltransferase; sequence DIFILDMTWN…DIIRNKSKEF (68 aa).

The protein belongs to the helicase family. NPH I subfamily. Monomer. Interacts (via C-terminus) with RAP94 (via N-terminus). Interacts with the cap-specific mRNA (nucleoside-2'-O-)-methyltransferase.

Its subcellular location is the virion. It carries out the reaction a ribonucleoside 5'-triphosphate + H2O = a ribonucleoside 5'-diphosphate + phosphate + H(+). In terms of biological role, DNA-dependent ATPase required for providing the needed energy to achieve the termination of early transcripts. Acts in concert with the RAP94 subunit of the virion RNA polymerase and the capping enzyme/VTF to catalyze release of UUUUUNU-containing nascent RNA from the elongation complex. NPH-I must bind ssDNA in order to exhibit ATPase activity. The polypeptide is Nucleoside triphosphatase I (NPH1) (Rabbit fibroma virus (strain Kasza) (RFV)).